Reading from the N-terminus, the 155-residue chain is MLDAIQCIEPNFSGKGLKIGIAMARFNTPVCHGLRDACLAELEKLGVAAGDITLATVPGALEVPLVLQTMAKSGRFDALVALGAVIRGETYHFELVSNESGAGVTRVGLDFDIPVANAILTTENDEQAEVRMLEKGGDAARVAVEMANLHKTLRG.

Residues phenylalanine 26, 60–62 (ALE), and 84–86 (AVI) contribute to the 5-amino-6-(D-ribitylamino)uracil site. Residue 89 to 90 (ET) coordinates (2S)-2-hydroxy-3-oxobutyl phosphate. Histidine 92 functions as the Proton donor in the catalytic mechanism. Residue asparagine 117 coordinates 5-amino-6-(D-ribitylamino)uracil. Residue arginine 131 participates in (2S)-2-hydroxy-3-oxobutyl phosphate binding.

Belongs to the DMRL synthase family.

The catalysed reaction is (2S)-2-hydroxy-3-oxobutyl phosphate + 5-amino-6-(D-ribitylamino)uracil = 6,7-dimethyl-8-(1-D-ribityl)lumazine + phosphate + 2 H2O + H(+). It functions in the pathway cofactor biosynthesis; riboflavin biosynthesis; riboflavin from 2-hydroxy-3-oxobutyl phosphate and 5-amino-6-(D-ribitylamino)uracil: step 1/2. Functionally, catalyzes the formation of 6,7-dimethyl-8-ribityllumazine by condensation of 5-amino-6-(D-ribitylamino)uracil with 3,4-dihydroxy-2-butanone 4-phosphate. This is the penultimate step in the biosynthesis of riboflavin. This Chromobacterium violaceum (strain ATCC 12472 / DSM 30191 / JCM 1249 / CCUG 213 / NBRC 12614 / NCIMB 9131 / NCTC 9757 / MK) protein is 6,7-dimethyl-8-ribityllumazine synthase.